A 347-amino-acid chain; its full sequence is Protein RecA (347 aa).

65–72 (GPESSGKT) contacts ATP.

The protein belongs to the RecA family.

Its subcellular location is the cytoplasm. Its function is as follows. Can catalyze the hydrolysis of ATP in the presence of single-stranded DNA, the ATP-dependent uptake of single-stranded DNA by duplex DNA, and the ATP-dependent hybridization of homologous single-stranded DNAs. It interacts with LexA causing its activation and leading to its autocatalytic cleavage. The sequence is that of Protein RecA from Aliivibrio salmonicida (strain LFI1238) (Vibrio salmonicida (strain LFI1238)).